The chain runs to 206 residues: Amelogenin, Y isoform (206 aa).

Residues 1 to 16 (MGTWILFACLVGAAFA) form the signal peptide. A disordered region spans residues 118-180 (VPGQQSMTPT…PPLPPMFPLR (63 aa)). Low complexity predominate over residues 128–142 (QHHQPNLPLPAQQPF). Positions 143–180 (QPQPVQPQPHQPMQPQPPVQPMQPLLPQPPLPPMFPLR) are enriched in pro residues.

Belongs to the amelogenin family.

The protein resides in the secreted. It is found in the extracellular space. It localises to the extracellular matrix. Plays a role in biomineralization. Seems to regulate the formation of crystallites during the secretory stage of tooth enamel development. Thought to play a major role in the structural organization and mineralization of developing enamel. This chain is Amelogenin, Y isoform (AMELY), found in Homo sapiens (Human).